The following is a 431-amino-acid chain: Enolase (431 aa).

Q168 is a (2R)-2-phosphoglycerate binding site. E210 serves as the catalytic Proton donor. Residues D247, E291, and D318 each contribute to the Mg(2+) site. The (2R)-2-phosphoglycerate site is built by K343, R372, S373, and K394. K343 functions as the Proton acceptor in the catalytic mechanism.

The protein belongs to the enolase family. Component of the RNA degradosome, a multiprotein complex involved in RNA processing and mRNA degradation. The cofactor is Mg(2+).

It is found in the cytoplasm. It localises to the secreted. The protein resides in the cell surface. The catalysed reaction is (2R)-2-phosphoglycerate = phosphoenolpyruvate + H2O. It participates in carbohydrate degradation; glycolysis; pyruvate from D-glyceraldehyde 3-phosphate: step 4/5. Its function is as follows. Catalyzes the reversible conversion of 2-phosphoglycerate (2-PG) into phosphoenolpyruvate (PEP). It is essential for the degradation of carbohydrates via glycolysis. The sequence is that of Enolase from Acinetobacter baylyi (strain ATCC 33305 / BD413 / ADP1).